The chain runs to 357 residues: uncharacterized protein (357 aa).

The region spanning 27-242 (HFGNTVTFER…VSSVRLNFPK (216 aa)) is the Radical SAM core domain. The [4Fe-4S] cluster site is built by C44, C50, and C53.

The cofactor is [4Fe-4S] cluster.

This is an uncharacterized protein from Methanocaldococcus jannaschii (strain ATCC 43067 / DSM 2661 / JAL-1 / JCM 10045 / NBRC 100440) (Methanococcus jannaschii).